Here is a 383-residue protein sequence, read N- to C-terminus: NAD(P) transhydrogenase subunit alpha part 1 (383 aa).

NAD(+) contacts are provided by residues 131-134, valine 181, 201-203, and glycine 231; these read QNMD and DVR.

The protein belongs to the AlaDH/PNT family. In terms of assembly, heterotrimer of two alpha chains and a beta (PntB) chain; in Rickettsia, the alpha chain is made of two subunits (PntAA and PntAB) and forms a dimer.

It catalyses the reaction NAD(+) + NADPH + H(+)(in) = NADH + NADP(+) + H(+)(out). Its function is as follows. The transhydrogenation between NADH and NADP is coupled to respiration and ATP hydrolysis and functions as a proton pump across the membrane. The chain is NAD(P) transhydrogenase subunit alpha part 1 (pntAA) from Rickettsia prowazekii (strain Madrid E).